The following is a 391-amino-acid chain: Na(+)/H(+) antiporter NhaA (391 aa).

The next 11 helical transmembrane spans lie at 14-34 (AGGI…NSPL), 47-67 (FGMS…FLLI), 87-107 (IFPA…YVAF), 117-137 (GWAI…ALLG), 146-166 (VFLL…IALF), 171-191 (LSTM…MLNA), 205-225 (AILW…GVVI), 252-272 (VAFG…LEGV), 280-300 (MLPL…IFTF), 318-338 (FIHI…SIFI), and 356-376 (LGIL…LHFS).

Belongs to the NhaA Na(+)/H(+) (TC 2.A.33) antiporter family.

It localises to the cell inner membrane. It catalyses the reaction Na(+)(in) + 2 H(+)(out) = Na(+)(out) + 2 H(+)(in). Its function is as follows. Na(+)/H(+) antiporter that extrudes sodium in exchange for external protons. The sequence is that of Na(+)/H(+) antiporter NhaA from Vibrio campbellii (strain ATCC BAA-1116).